Here is a 135-residue protein sequence, read N- to C-terminus: Small ribosomal subunit protein uS9 (135 aa).

The segment covering 108–118 (VGDSRRTEPHK) has biased composition (basic and acidic residues). Residues 108–135 (VGDSRRTEPHKPNRSTKGPRAKRQKSYR) form a disordered region. Residues 119–135 (PNRSTKGPRAKRQKSYR) show a composition bias toward basic residues.

The protein belongs to the universal ribosomal protein uS9 family. Part of the 30S ribosomal subunit.

The chain is Small ribosomal subunit protein uS9 from Thermococcus kodakarensis (strain ATCC BAA-918 / JCM 12380 / KOD1) (Pyrococcus kodakaraensis (strain KOD1)).